The following is a 363-amino-acid chain: MLKTTPLNAAHRAMNAKMVDFGGWDMPLHYGSQLDEHHSVRRDAGMFDVSHMLTVDIHGENVRQFLRGLVANNVDKLTLPGKALYTCMLTPTGGIIDDLIIYFLSESWFRLVVNAGTADKDIDWITGQSRQLAPALTITPRRDLAMIAVQGPNARTKVWNVIPDSQAISENLKPFQSVMLGDYFIARTGYTGEDGFEITLPAGQAADFWQKLHAAGVAPAGLGARDTLRLEAGMNLYGQDMDETVNPLESGLAWTVDLKSERDFTGKQTLLETPVNRQLVGLVLLDKGVLRNHQKVITRQEGEAGEGEITSGGFSPTLNQSIALARIPAGIAAGEQVHVVVRDKQLAAKVVKYPFVRNGQALV.

It belongs to the GcvT family. The glycine cleavage system is composed of four proteins: P, T, L and H.

The catalysed reaction is N(6)-[(R)-S(8)-aminomethyldihydrolipoyl]-L-lysyl-[protein] + (6S)-5,6,7,8-tetrahydrofolate = N(6)-[(R)-dihydrolipoyl]-L-lysyl-[protein] + (6R)-5,10-methylene-5,6,7,8-tetrahydrofolate + NH4(+). The glycine cleavage system catalyzes the degradation of glycine. In Nitrosomonas europaea (strain ATCC 19718 / CIP 103999 / KCTC 2705 / NBRC 14298), this protein is Aminomethyltransferase.